Here is a 570-residue protein sequence, read N- to C-terminus: Periplasmic trehalase (570 aa).

Positions 1 to 34 are cleaved as a signal peptide; sequence MIPPEIRRSVLLQKAIKLALAGTLLTFASFSATA. Residues R159, 166 to 167, N203, 212 to 214, 284 to 286, and G317 each bind substrate; these read WD, RSQ, and RPE. Active-site proton donor/acceptor residues include D319 and E503. E518 contributes to the substrate binding site. The interval 544-570 is disordered; that stretch reads KPCDSVPSTRPASLSATPTKTPSAATQ. Positions 554-570 are enriched in low complexity; it reads PASLSATPTKTPSAATQ.

Belongs to the glycosyl hydrolase 37 family. As to quaternary structure, monomer.

The protein resides in the periplasm. It carries out the reaction alpha,alpha-trehalose + H2O = alpha-D-glucose + beta-D-glucose. Its function is as follows. Provides the cells with the ability to utilize trehalose at high osmolarity by splitting it into glucose molecules that can subsequently be taken up by the phosphotransferase-mediated uptake system. The polypeptide is Periplasmic trehalase (Salmonella dublin (strain CT_02021853)).